The sequence spans 292 residues: Cyclin-dependent kinase 5 (292 aa).

A Protein kinase domain is found at 4–286 (YEKLEKIGEG…AEEALQHPYF (283 aa)). ATP-binding positions include 10 to 18 (IGEGTYGTV) and K33. Y15 is subject to Phosphotyrosine; by ABL1, EPHA4 and FYN. T17 carries the phosphothreonine modification. Residue K56 is modified to N6-acetyllysine. S72 is modified (phosphoserine). D126 serves as the catalytic Proton acceptor. Phosphoserine is present on S159.

This sequence belongs to the protein kinase superfamily. CMGC Ser/Thr protein kinase family. CDC2/CDKX subfamily. Heterodimer composed of a catalytic subunit CDK5 and a regulatory subunit CDK5R1 (p25) and macromolecular complex composed of at least CDK5, CDK5R1 (p35) and CDK5RAP1 or CDK5RAP2 or CDK5RAP3. Only the heterodimer shows kinase activity. Under neurotoxic stress and neuronal injury conditions, p35 is cleaved by calpain to generate p25 that hyperactivates CDK5, that becomes functionally disabled and often toxic. Found in a trimolecular complex with CABLES1 and ABL1. Interacts with CABLES1 and CABLES2. Interacts with AATK and GSTP1. Binds to HDAC1 when in complex with p25. Interaction with myristoylation p35 promotes CDK5 association with membranes. Both isoforms 1 and 2 interacts with beta-catenin/CTNNB1. Interacts with delta-catenin/CTNND2 and APEX1. Interacts with P53/TP53 in neurons. Interacts with PTK2/FAK1. Interacts with EPHA4; may mediate the activation of NGEF by EPHA4. The complex p35/CDK5 interacts with CLOCK. Interacts with HTR6. Phosphorylation on Tyr-15 by ABL1 and FYN, and on Ser-159 by casein kinase 1 promotes kinase activity. By contrast, phosphorylation at Thr-14 inhibits activity. In terms of processing, phosphorylation at Ser-159 is essential for maximal catalytic activity. In terms of tissue distribution, expressed in hippocampal neuronal synaptic termini (at protein level). Expressed predominantly in post-mitotic neurons of the central and peripheral nervous system.

The protein localises to the cytoplasm. It is found in the nucleus. It localises to the cell membrane. The protein resides in the perikaryon. Its subcellular location is the cell projection. The protein localises to the lamellipodium. It is found in the growth cone. It localises to the postsynaptic density. The protein resides in the synapse. The catalysed reaction is L-seryl-[protein] + ATP = O-phospho-L-seryl-[protein] + ADP + H(+). It catalyses the reaction L-threonyl-[protein] + ATP = O-phospho-L-threonyl-[protein] + ADP + H(+). With respect to regulation, inhibited by 2-(1-ethyl-2-hydroxyethylamino)-6-benzylamino-9-isopropylpurine (roscovitine), 1-isopropyl-4-aminobenzyl-6-ether-linked benzimidazoles, resveratrol, AT-7519 and olomoucine. Activated by CDK5R1 (p35) and CDK5R2 (p39) during the development of the nervous system; degradation of CDK5R1 (p35) and CDK5R2 (p39) by proteasome result in down regulation of kinase activity, during this process, CDK5 phosphorylates p35 and induces its ubiquitination and subsequent degradation. Kinase activity is mainly determined by the amount of p35 available and subcellular location; reversible association to plasma membrane inhibits activity. Long-term inactivation as well as CDK5R1 (p25)-mediated hyperactivation of CDK5 triggers cell death. The pro-death activity of hyperactivated CDK5 is suppressed by membrane association of CDK5, via myristoylation of p35. Brain-derived neurotrophic factor, glial-derived neurotrophic factor, nerve growth factor (NGF), retinoic acid, laminin and neuregulin promote activity. Neurotoxicity enhances nuclear activity, thus leading to MEF2 phosphorylation and inhibition prior to apoptosis of cortical neurons. Repression by GSTP1 via p25/p35 translocation prevents neurodegeneration. In terms of biological role, proline-directed serine/threonine-protein kinase essential for neuronal cell cycle arrest and differentiation and may be involved in apoptotic cell death in neuronal diseases by triggering abortive cell cycle re-entry. Interacts with D1 and D3-type G1 cyclins. Phosphorylates SRC, NOS3, VIM/vimentin, p35/CDK5R1, MEF2A, SIPA1L1, SH3GLB1, PXN, PAK1, MCAM/MUC18, SEPT5, SYN1, DNM1, AMPH, SYNJ1, CDK16, RAC1, RHOA, CDC42, TONEBP/NFAT5, MAPT/TAU, MAP1B, histone H1, p53/TP53, HDAC1, APEX1, PTK2/FAK1, huntingtin/HTT, ATM, MAP2, NEFH and NEFM. Regulates several neuronal development and physiological processes including neuronal survival, migration and differentiation, axonal and neurite growth, synaptogenesis, oligodendrocyte differentiation, synaptic plasticity and neurotransmission, by phosphorylating key proteins. Negatively regulates the CACNA1B/CAV2.2 -mediated Ca(2+) release probability at hippocampal neuronal soma and synaptic terminals. Activated by interaction with CDK5R1 (p35) and CDK5R2 (p39), especially in postmitotic neurons, and promotes CDK5R1 (p35) expression in an autostimulation loop. Phosphorylates many downstream substrates such as Rho and Ras family small GTPases (e.g. PAK1, RAC1, RHOA, CDC42) or microtubule-binding proteins (e.g. MAPT/TAU, MAP2, MAP1B), and modulates actin dynamics to regulate neurite growth and/or spine morphogenesis. Also phosphorylates exocytosis associated proteins such as MCAM/MUC18, SEPT5, SYN1, and CDK16/PCTAIRE1 as well as endocytosis associated proteins such as DNM1, AMPH and SYNJ1 at synaptic terminals. In the mature central nervous system (CNS), regulates neurotransmitter movements by phosphorylating substrates associated with neurotransmitter release and synapse plasticity; synaptic vesicle exocytosis, vesicles fusion with the presynaptic membrane, and endocytosis. Promotes cell survival by activating anti-apoptotic proteins BCL2 and STAT3, and negatively regulating of JNK3/MAPK10 activity. Phosphorylation of p53/TP53 in response to genotoxic and oxidative stresses enhances its stabilization by preventing ubiquitin ligase-mediated proteasomal degradation, and induces transactivation of p53/TP53 target genes, thus regulating apoptosis. Phosphorylation of p35/CDK5R1 enhances its stabilization by preventing calpain-mediated proteolysis producing p25/CDK5R1 and avoiding ubiquitin ligase-mediated proteasomal degradation. During aberrant cell-cycle activity and DNA damage, p25/CDK5 activity elicits cell-cycle activity and double-strand DNA breaks that precedes neuronal death by deregulating HDAC1. DNA damage triggered phosphorylation of huntingtin/HTT in nuclei of neurons protects neurons against polyglutamine expansion as well as DNA damage mediated toxicity. Phosphorylation of PXN reduces its interaction with PTK2/FAK1 in matrix-cell focal adhesions (MCFA) during oligodendrocytes (OLs) differentiation. Negative regulator of Wnt/beta-catenin signaling pathway. Activator of the GAIT (IFN-gamma-activated inhibitor of translation) pathway, which suppresses expression of a post-transcriptional regulon of proinflammatory genes in myeloid cells; phosphorylates the linker domain of glutamyl-prolyl tRNA synthetase (EPRS) in a IFN-gamma-dependent manner, the initial event in assembly of the GAIT complex. Phosphorylation of SH3GLB1 is required for autophagy induction in starved neurons. Phosphorylation of TONEBP/NFAT5 in response to osmotic stress mediates its rapid nuclear localization. MEF2 is inactivated by phosphorylation in nucleus in response to neurotoxin, thus leading to neuronal apoptosis. APEX1 AP-endodeoxyribonuclease is repressed by phosphorylation, resulting in accumulation of DNA damage and contributing to neuronal death. NOS3 phosphorylation down regulates NOS3-derived nitrite (NO) levels. SRC phosphorylation mediates its ubiquitin-dependent degradation and thus leads to cytoskeletal reorganization. May regulate endothelial cell migration and angiogenesis via the modulation of lamellipodia formation. Involved in dendritic spine morphogenesis by mediating the EFNA1-EPHA4 signaling. The complex p35/CDK5 participates in the regulation of the circadian clock by modulating the function of CLOCK protein: phosphorylates CLOCK at 'Thr-451' and 'Thr-461' and regulates the transcriptional activity of the CLOCK-BMAL1 heterodimer in association with altered stability and subcellular distribution. The sequence is that of Cyclin-dependent kinase 5 from Rattus norvegicus (Rat).